The sequence spans 374 residues: ORC1-type DNA replication protein 6 (374 aa).

Residues 66-70, Y209, and R221 contribute to the ATP site; that span reads TGKTT.

Belongs to the CDC6/cdc18 family.

Its function is as follows. Involved in regulation of DNA replication. This Halobacterium salinarum (strain ATCC 700922 / JCM 11081 / NRC-1) (Halobacterium halobium) protein is ORC1-type DNA replication protein 6 (orc6).